Reading from the N-terminus, the 559-residue chain is S-layer protein (559 aa).

The first 28 residues, 1 to 28 (MAMSLKKIGAIAVGGAMVASALASGVMA), serve as a signal peptide directing secretion. N108, N130, N155, N222, and N373 each carry an N-linked (GlcNAc...) asparagine glycan.

The protein belongs to the Mj S-layer protein family.

The protein localises to the secreted. The protein resides in the cell wall. Its subcellular location is the S-layer. Its function is as follows. S-layer protein. The S-layer is a paracrystalline mono-layered assembly of proteins which coat the surface of the cell. The chain is S-layer protein from Methanothermococcus thermolithotrophicus (Methanococcus thermolithotrophicus).